Consider the following 268-residue polypeptide: Protein atz-1 (268 aa).

The stretch at 171–243 (VDDANKLTEV…EEGEEDYEEE (73 aa)) forms a coiled coil. The disordered stretch occupies residues 229-268 (DLMKEEEGEEDYEEEENYEVEEDFEDEEEYDEEGEEEDYE). The segment covering 231-268 (MKEEEGEEDYEEEENYEVEEDFEDEEEYDEEGEEEDYE) has biased composition (acidic residues).

It is found in the nucleus. Plays a role in meiosis, germline development and oocyte morphogenesis. May play a role in DNA replication. In the germline, involved in the maintenance of transition zone nuclei and in chromosome structure and organization, but not required for mitotic proliferation. The polypeptide is Protein atz-1 (Caenorhabditis elegans).